Here is an 891-residue protein sequence, read N- to C-terminus: Schlafen family member 5 (891 aa).

Lysine 59 is covalently cross-linked (Glycyl lysine isopeptide (Lys-Gly) (interchain with G-Cter in SUMO2)). 578–585 contributes to the ATP binding site; it reads GLPGSGKT.

The protein belongs to the Schlafen family. Subgroup III subfamily.

In terms of biological role, may have a role in hematopoietic cell differentiation. The polypeptide is Schlafen family member 5 (SLFN5) (Homo sapiens (Human)).